A 428-amino-acid chain; its full sequence is Isocitrate lyase 1 (428 aa).

91-93 (SGW) lines the substrate pocket. Asp153 is a binding site for Mg(2+). Cys191 serves as the catalytic Proton acceptor. Substrate is bound by residues 192-193 (GH), Arg228, 313-317 (NCSPS), and Thr347.

The protein belongs to the isocitrate lyase/PEP mutase superfamily. Isocitrate lyase family. As to quaternary structure, homotetramer. Mg(2+) serves as cofactor.

The catalysed reaction is D-threo-isocitrate = glyoxylate + succinate. It carries out the reaction (2S,3R)-3-hydroxybutane-1,2,3-tricarboxylate = pyruvate + succinate. Its pathway is carbohydrate metabolism; glyoxylate cycle; (S)-malate from isocitrate: step 1/2. In terms of biological role, involved in the persistence and virulence of M.tuberculosis. Catalyzes the reversible formation of succinate and glyoxylate from isocitrate, a key step of the glyoxylate cycle, which operates as an anaplerotic route for replenishing the tricarboxylic acid cycle during growth on fatty acid substrates. It also catalyzes the formation of pyruvate and succinate from 2-methylisocitrate, a key step in the methylcitrate cycle (propionate degradation route). The sequence is that of Isocitrate lyase 1 (icl1) from Mycobacterium tuberculosis (strain ATCC 35801 / TMC 107 / Erdman).